We begin with the raw amino-acid sequence, 196 residues long: Large ribosomal subunit protein uL6 (196 aa).

This sequence belongs to the universal ribosomal protein uL6 family. As to quaternary structure, part of the 50S ribosomal subunit.

In terms of biological role, this protein binds to the 23S rRNA, and is important in its secondary structure. It is located near the subunit interface in the base of the L7/L12 stalk, and near the tRNA binding site of the peptidyltransferase center. The chain is Large ribosomal subunit protein uL6 from Pyrobaculum aerophilum (strain ATCC 51768 / DSM 7523 / JCM 9630 / CIP 104966 / NBRC 100827 / IM2).